We begin with the raw amino-acid sequence, 178 residues long: Transcription factor E (178 aa).

One can recognise an HTH TFE/IIEalpha-type domain in the interval 4-88 (AEDLFINLAK…YWKPNIDQIN (85 aa)).

Belongs to the TFE family. As to quaternary structure, monomer. Interaction with RNA polymerase subunits RpoF and RpoE is necessary for Tfe stimulatory transcription activity. Able to interact with Tbp and RNA polymerase in the absence of DNA promoter. Interacts both with the preinitiation and elongation complexes.

Functionally, transcription factor that plays a role in the activation of archaeal genes transcribed by RNA polymerase. Facilitates transcription initiation by enhancing TATA-box recognition by TATA-box-binding protein (Tbp), and transcription factor B (Tfb) and RNA polymerase recruitment. Not absolutely required for transcription in vitro, but particularly important in cases where Tbp or Tfb function is not optimal. It dynamically alters the nucleic acid-binding properties of RNA polymerases by stabilizing the initiation complex and destabilizing elongation complexes. Seems to translocate with the RNA polymerase following initiation and acts by binding to the non template strand of the transcription bubble in elongation complexes. The chain is Transcription factor E from Saccharolobus islandicus (strain L.S.2.15 / Lassen #1) (Sulfolobus islandicus).